The chain runs to 227 residues: GFP-like non-fluorescent chromoprotein (227 aa).

The segment at residues 63–65 is a cross-link (5-imidazolinone (Ala-Gly)); the sequence is AYG. Residue Y64 is modified to 2,3-didehydrotyrosine.

This sequence belongs to the GFP family. In terms of assembly, homotetramer. Post-translationally, contains a chromophore consisting of modified amino acid residues. The chromophore is formed by autocatalytic backbone condensation between Xaa-N and Gly-(N+2), and oxidation of Tyr-(N+1) to didehydrotyrosine. Maturation of the chromophore requires nothing other than molecular oxygen. The precise stereochemistry of the tyrosine has not been determined.

Non-fluorescent pigment protein that is mauve in color. The wild-type form is non-fluorescent. This Condylactis gigantea (Giant Caribbean anemone) protein is GFP-like non-fluorescent chromoprotein.